Reading from the N-terminus, the 188-residue chain is Cytidylate kinase (188 aa).

7–15 (GKIGSGKST) is an ATP binding site.

Belongs to the cytidylate kinase family. Type 2 subfamily.

The protein resides in the cytoplasm. It carries out the reaction CMP + ATP = CDP + ADP. It catalyses the reaction dCMP + ATP = dCDP + ADP. The chain is Cytidylate kinase (cmk) from Thermoplasma acidophilum (strain ATCC 25905 / DSM 1728 / JCM 9062 / NBRC 15155 / AMRC-C165).